A 230-amino-acid polypeptide reads, in one-letter code: Extracellular ribonuclease LE (230 aa).

Positions 1 to 25 (MASNSAFSLFLILLIITQCLSVLNA) are cleaved as a signal peptide. An RNA-binding site is contributed by Q37. Disulfide bonds link C43–C49, C50–C106, C79–C125, C186–C221, and C202–C213. Residues H64, F114, 117-118 (HE), and 121-122 (KH) each bind RNA. H64 acts as the Proton donor in catalysis. E118 is a catalytic residue. The active-site Proton acceptor is H122.

This sequence belongs to the RNase T2 family.

The protein resides in the secreted. It localises to the extracellular space. Its subcellular location is the cell wall. The catalysed reaction is a ribonucleotidyl-ribonucleotide-RNA + H2O = a 3'-end 3'-phospho-ribonucleotide-RNA + a 5'-end dephospho-ribonucleoside-RNA + H(+). In terms of biological role, probably involved in plant phosphate-starvation rescue system. The chain is Extracellular ribonuclease LE from Solanum lycopersicum (Tomato).